The sequence spans 270 residues: 3-methyl-2-oxobutanoate hydroxymethyltransferase (270 aa).

Mg(2+) is bound by residues Asp41 and Asp80. Residues Asp41–Ser42, Asp80, and Lys109 each bind 3-methyl-2-oxobutanoate. Glu111 contacts Mg(2+). Glu178 acts as the Proton acceptor in catalysis.

The protein belongs to the PanB family. In terms of assembly, homodecamer; pentamer of dimers. It depends on Mg(2+) as a cofactor.

Its subcellular location is the cytoplasm. The enzyme catalyses 3-methyl-2-oxobutanoate + (6R)-5,10-methylene-5,6,7,8-tetrahydrofolate + H2O = 2-dehydropantoate + (6S)-5,6,7,8-tetrahydrofolate. It participates in cofactor biosynthesis; (R)-pantothenate biosynthesis; (R)-pantoate from 3-methyl-2-oxobutanoate: step 1/2. Its function is as follows. Catalyzes the reversible reaction in which hydroxymethyl group from 5,10-methylenetetrahydrofolate is transferred onto alpha-ketoisovalerate to form ketopantoate. The chain is 3-methyl-2-oxobutanoate hydroxymethyltransferase from Thermotoga sp. (strain RQ2).